The primary structure comprises 882 residues: Putative HTH-type transcriptional regulator Rv0890c (882 aa).

An HTH luxR-type domain is found at 814 to 879 (PARGWGSLTP…QLVDEAARRG (66 aa)). Residues 838–857 (NKDIAKRLFVSPRTVQTHLT) constitute a DNA-binding region (H-T-H motif).

The sequence is that of Putative HTH-type transcriptional regulator Rv0890c from Mycobacterium tuberculosis (strain ATCC 25618 / H37Rv).